Reading from the N-terminus, the 1103-residue chain is Detocs histidine-protein kinase DtcA (1103 aa).

H758 is modified (phosphohistidine; by autocatalysis). One copy of the TPR repeat lies at 818–851; the sequence is TIINDAKEKVHINTGEFIESAKVFNYAIEIEFVE.

Post-translationally, autophosphorylated.

It carries out the reaction ATP + protein L-histidine = ADP + protein N-phospho-L-histidine.. Its function is as follows. Sensor-kinase member of the two-component regulatory system Detocs that confers resistance to bacteriophage. When the system (DtcA-DtcB-DtcC) is expressed in a susceptible E.coli (strain MG1655) it confers resistance to bacteriophages T2, T4, T5, T7, SECphi4, SECphi6 and SECphi27; the level of resistance varies, resistance to T2, T7 and SECphi4 is not very high. DtcA (this subunit) probably autophosphorylates upon sensing viral infection, and subsequently transfers the phosphate signal to DtcC which activates it, leading to an antiviral defense; DtcB may scavenge phosphorylation signals from accidental activation of DtcA. This chain is Detocs histidine-protein kinase DtcA, found in Enterobacter cloacae (strain JD6301).